Consider the following 120-residue polypeptide: Large ribosomal subunit protein uL18 (120 aa).

Belongs to the universal ribosomal protein uL18 family. As to quaternary structure, part of the 50S ribosomal subunit; part of the 5S rRNA/L5/L18/L25 subcomplex. Contacts the 5S and 23S rRNAs.

Its function is as follows. This is one of the proteins that bind and probably mediate the attachment of the 5S RNA into the large ribosomal subunit, where it forms part of the central protuberance. This chain is Large ribosomal subunit protein uL18, found in Rhizobium rhizogenes (strain K84 / ATCC BAA-868) (Agrobacterium radiobacter).